A 312-amino-acid chain; its full sequence is Very-long-chain 3-oxoacyl-CoA reductase-like protein At1g24470 (312 aa).

Residues 14 to 34 form a helical membrane-spanning segment; it reads LHFVCFIGFLFLLRVLFIPLL. 52–81 is a binding site for NADP(+); the sequence is GSWAMVTGATEGIGRAFAHELAKHGLNLIL. Serine 190 lines the substrate pocket. The Proton acceptor role is filled by tyrosine 205.

The protein belongs to the short-chain dehydrogenases/reductases (SDR) family. Expressed in green siliques, flowers, inflorescence stems and leaves. Not detected in roots.

It is found in the endoplasmic reticulum membrane. Probable reductase, but unlike KCR1, has no beta-ketoacyl-coenzyme A reductase activity. In Arabidopsis thaliana (Mouse-ear cress), this protein is Very-long-chain 3-oxoacyl-CoA reductase-like protein At1g24470 (KCR2).